Consider the following 459-residue polypeptide: Transcriptional coactivator YAP1-A (459 aa).

A compositionally biased stretch (low complexity) spans 1–13 (MEPGSQQQPSAPA). Residues 1–22 (MEPGSQQQPSAPAQQPPPVGHQ) are disordered. Phosphoserine; by LATS1 and LATS2 is present on residues S30, S80, S98, and S134. Disordered stretches follow at residues 65–99 (FKQPQPEAKSHSRQASTDGGSAGALTPQHVRAHSS) and 126–145 (SAPHLRQSSYEIPDDVPLPP). WW domains lie at 141–174 (VPLPPGWEMAKTPSGQRYFLNHIDQTTTWQDPRK) and 199–232 (GPLPDGWEQALTPEGEAYFINHKNKSTSWLDPRL). Residues 246-268 (NAPVKAPPALPPPSPQTGVLGSG) form a disordered region. Over residues 250–260 (KAPPALPPPSP) the composition is skewed to pro residues. Positions 261–459 (QTGVLGSGGN…LDKESFLTWL (199 aa)) are transactivation domain. Residues 269 to 297 (GNQQMRLQQLQMEKERLRLKHQELLRQVR) adopt a coiled-coil conformation. A disordered region spans residues 344–363 (GTYHSRDESTESGLSMSSYS). Residues 354–363 (ESGLSMSSYS) show a composition bias toward polar residues.

The protein belongs to the YAP1 family. As to quaternary structure, interacts with tead1. Post-translationally, phosphorylated by lats1 and lats2; leading to cytoplasmic translocation and inactivation.

The protein resides in the cytoplasm. Its subcellular location is the nucleus. It localises to the cell junction. It is found in the tight junction. The protein localises to the cell membrane. Transcriptional regulator which can act both as a coactivator and a corepressor and is the critical downstream regulatory target in the Hippo signaling pathway that plays a pivotal role in organ size control and tumor suppression by restricting proliferation and promoting apoptosis. Plays a key role in tissue tension and 3D tissue shape by regulating cortical actomyosin network formation. Required for expansion of the neural plate and neural plate border zone progenitor pools. Acts as a direct regulator of pax3 expression via interaction with tead1. This Xenopus laevis (African clawed frog) protein is Transcriptional coactivator YAP1-A.